Here is a 77-residue protein sequence, read N- to C-terminus: U8-lycotoxin-Ls1u (77 aa).

A signal peptide spans 1–20 (MKLIIFTGLVLFAIVSLIEA). Residues 21-26 (QAENEK) constitute a propeptide that is removed on maturation.

It belongs to the neurotoxin 19 (CSTX) family. 08 (U8-Lctx) subfamily. Contains 4 disulfide bonds. As to expression, expressed by the venom gland.

Its subcellular location is the secreted. The polypeptide is U8-lycotoxin-Ls1u (Lycosa singoriensis (Wolf spider)).